The chain runs to 465 residues: UDP-N-acetylmuramate--L-alanine ligase (465 aa).

An ATP-binding site is contributed by 112–118; that stretch reads GTHGKTT.

This sequence belongs to the MurCDEF family.

It is found in the cytoplasm. The catalysed reaction is UDP-N-acetyl-alpha-D-muramate + L-alanine + ATP = UDP-N-acetyl-alpha-D-muramoyl-L-alanine + ADP + phosphate + H(+). The protein operates within cell wall biogenesis; peptidoglycan biosynthesis. In terms of biological role, cell wall formation. The protein is UDP-N-acetylmuramate--L-alanine ligase of Burkholderia multivorans (strain ATCC 17616 / 249).